A 20-amino-acid polypeptide reads, in one-letter code: 2-oxo-acid reductase (20 aa).

It belongs to the AOR/FOR family. Forms various types of homooligomers. The cofactor is [4Fe-4S] cluster. Requires Mo-molybdopterin as cofactor.

The protein resides in the cell membrane. The catalysed reaction is a (2R)-2-hydroxycarboxylate + A = a 2-oxocarboxylate + AH2. Is inhibited by cyanide. Is sensitive to oxygen. In terms of biological role, oxidoreductase with an extremely broad substrate specificity that can reduce reversibly 2-oxocarboxylates to (2R)-hydroxycarboxylates. In Proteus hauseri, this protein is 2-oxo-acid reductase.